A 381-amino-acid chain; its full sequence is Succinyl-diaminopimelate desuccinylase (381 aa).

His68 provides a ligand contact to Zn(2+). Asp70 is a catalytic residue. Asp101 contacts Zn(2+). The active-site Proton acceptor is the Glu135. 3 residues coordinate Zn(2+): Glu136, Glu164, and His350.

This sequence belongs to the peptidase M20A family. DapE subfamily. In terms of assembly, homodimer. The cofactor is Zn(2+). Requires Co(2+) as cofactor.

The enzyme catalyses N-succinyl-(2S,6S)-2,6-diaminopimelate + H2O = (2S,6S)-2,6-diaminopimelate + succinate. The protein operates within amino-acid biosynthesis; L-lysine biosynthesis via DAP pathway; LL-2,6-diaminopimelate from (S)-tetrahydrodipicolinate (succinylase route): step 3/3. Catalyzes the hydrolysis of N-succinyl-L,L-diaminopimelic acid (SDAP), forming succinate and LL-2,6-diaminopimelate (DAP), an intermediate involved in the bacterial biosynthesis of lysine and meso-diaminopimelic acid, an essential component of bacterial cell walls. This chain is Succinyl-diaminopimelate desuccinylase, found in Neisseria meningitidis serogroup C / serotype 2a (strain ATCC 700532 / DSM 15464 / FAM18).